The sequence spans 318 residues: (1S)-1,7-diacetoxy-luvungin A aldo-keto reductase (318 aa).

Tyr54 serves as the catalytic Proton donor.

Belongs to the aldo/keto reductase family. As to expression, expressed in flowers, maturing fruits and in juice vesicles.

The enzyme catalyses (1S)-1,7-diacetoxy-luvungin A + AH2 + H2O = (1R,2R,3S,8R,10R,11R,15S,16S)-3-(acetyloxy)-15-[(4R)-4-[(2S)-3,3-dimethyloxiran-2-yl]-1,4-dihydroxybutan-2-yl]-2,7,7,11,16-pentamethyl-5-oxo-6-oxatetracyclo[9.7.0.0(2,8).0(12,16)]octadec-12-en-10-yl acetate + acetate + A + H(+). The protein operates within secondary metabolite biosynthesis; terpenoid biosynthesis. Aldo-keto reductase involved in the biosynthesis of limonoids triterpene natural products such as limonin, a compound with insecticidal activity responsible for the bitter taste in citrus. Can use (1S)-1,7-diacetoxy-luvungin A as substrate. The chain is (1S)-1,7-diacetoxy-luvungin A aldo-keto reductase from Citrus sinensis (Sweet orange).